Here is a 357-residue protein sequence, read N- to C-terminus: Peptide chain release factor 1 (357 aa).

Gln-234 carries the post-translational modification N5-methylglutamine. Residues Ser-283 to Gln-313 form a disordered region.

The protein belongs to the prokaryotic/mitochondrial release factor family. Post-translationally, methylated by PrmC. Methylation increases the termination efficiency of RF1.

It is found in the cytoplasm. Peptide chain release factor 1 directs the termination of translation in response to the peptide chain termination codons UAG and UAA. The protein is Peptide chain release factor 1 of Borrelia garinii subsp. bavariensis (strain ATCC BAA-2496 / DSM 23469 / PBi) (Borreliella bavariensis).